The following is a 553-amino-acid chain: Coiled-coil domain-containing protein 22 homolog (553 aa).

Coiled-coil stretches lie at residues 261-404 and 498-553; these read LEEL…TATQ and NVTK…VAKA.

It belongs to the CCDC22 family.

The chain is Coiled-coil domain-containing protein 22 homolog from Drosophila pseudoobscura pseudoobscura (Fruit fly).